We begin with the raw amino-acid sequence, 752 residues long: Glutamate carboxypeptidase 2 (752 aa).

Topologically, residues 1-22 (MWNALQDRDSAEVLGHRQRWLR) are cytoplasmic. Position 10 is a phosphoserine (Ser-10). A helical; Signal-anchor for type II membrane protein transmembrane segment spans residues 23 to 44 (VGTLVLALTGTFLIGFLFGWFI). Topologically, residues 45 to 752 (KPSNEATGNV…AAAETLREVA (708 aa)) are extracellular. Residues Asn-78, Asn-123, and Asn-155 are each glycosylated (N-linked (GlcNAc...) asparagine). The substrate site is built by Arg-212 and Asn-259. Thr-271 and Tyr-274 together coordinate Ca(2+). The segment at 276-589 (ANEHAYRHEL…QVRGAMVFEL (314 aa)) is NAALADase. Asn-338 carries an N-linked (GlcNAc...) asparagine glycan. Zn(2+)-binding residues include His-379 and Asp-389. Glu-426 provides a ligand contact to substrate. Residue Glu-426 is the Nucleophile; for NAALADase activity of the active site. Residue Glu-427 participates in Zn(2+) binding. Ca(2+) is bound by residues Glu-435 and Glu-438. Asp-455 is a Zn(2+) binding site. N-linked (GlcNAc...) asparagine glycosylation is found at Asn-461 and Asn-478. Substrate-binding positions include 519–520 (SG), Asn-521, 536–538 (RAR), Tyr-554, and 554–555 (YH). His-555 contacts Zn(2+). Residue Asn-615 is glycosylated (N-linked (GlcNAc...) asparagine). Ser-630 functions as the Charge relay system in the catalytic mechanism. The N-linked (GlcNAc...) asparagine glycan is linked to Asn-640. Active-site charge relay system residues include Asp-668 and His-691. 701–702 (KY) provides a ligand contact to substrate. A glycan (N-linked (GlcNAc...) asparagine) is linked at Asn-722.

The protein belongs to the peptidase M28 family. M28B subfamily. In terms of assembly, homodimer. Zn(2+) serves as cofactor. In terms of tissue distribution, expressed predominantly in the hippocampal region of the brain and in kidney. Lower levels in the ovary, testis and mandibular gland.

The protein localises to the cell membrane. It catalyses the reaction Release of an unsubstituted, C-terminal glutamyl residue, typically from Ac-Asp-Glu or folylpoly-gamma-glutamates.. The NAALADase and folate hydrolase activities are inhibited by quisqualic acid. Functionally, has both folate hydrolase and N-acetylated-alpha-linked-acidic dipeptidase (NAALADase) activity. Has a preference for tri-alpha-glutamate peptides. In the intestine, required for the uptake of folate. In the brain, modulates excitatory neurotransmission through the hydrolysis of the neuropeptide, N-aceylaspartylglutamate (NAAG), thereby releasing glutamate. In terms of biological role, also exhibits a dipeptidyl-peptidase IV type activity. In vitro, cleaves Gly-Pro-AMC. This Mus musculus (Mouse) protein is Glutamate carboxypeptidase 2 (Folh1).